Reading from the N-terminus, the 360-residue chain is MKTSMQRKLDQLSTRLAELNDLLSRENVTADLDQYRKLTREHAELGPVVEQYALWRQSRSDETAAQELLADPSMRDFAEDEIRSAREGMARLETELQKMLLPKDPNDDRNIFLEIRAGTGGDESALFAGDLLRMYLRFAERQRWQVEMMSESASDLGGYKEVIVRIAGQGAYSRLKFESGGHRVQRVPATETQGRIHTSACTVAVMPEADEIGEVEINPADLRIDTFRASGAGGQHINKTDSAVRVTHIPTGIVVECQDDRSQHKNKDRALKVLAARIKDKQYHEQHAKEAATRKSLIGSGDRSERIRTYNFPQGRMTDHRINLTLYRLEAIMDGDLDELIGALVTEHQAELLASLGEAD.

Q235 carries the N5-methylglutamine modification.

It belongs to the prokaryotic/mitochondrial release factor family. In terms of processing, methylated by PrmC. Methylation increases the termination efficiency of RF1.

Its subcellular location is the cytoplasm. Functionally, peptide chain release factor 1 directs the termination of translation in response to the peptide chain termination codons UAG and UAA. The polypeptide is Peptide chain release factor 1 (Burkholderia cenocepacia (strain HI2424)).